Reading from the N-terminus, the 102-residue chain is NADH-quinone oxidoreductase subunit K (102 aa).

3 consecutive transmembrane segments (helical) span residues 6–26 (LEHG…GVMV), 30–50 (LLFM…AFVL), and 62–82 (VMFI…LAIV).

The protein belongs to the complex I subunit 4L family. As to quaternary structure, NDH-1 is composed of 14 different subunits. Subunits NuoA, H, J, K, L, M, N constitute the membrane sector of the complex.

Its subcellular location is the cell inner membrane. It catalyses the reaction a quinone + NADH + 5 H(+)(in) = a quinol + NAD(+) + 4 H(+)(out). Its function is as follows. NDH-1 shuttles electrons from NADH, via FMN and iron-sulfur (Fe-S) centers, to quinones in the respiratory chain. The immediate electron acceptor for the enzyme in this species is believed to be ubiquinone. Couples the redox reaction to proton translocation (for every two electrons transferred, four hydrogen ions are translocated across the cytoplasmic membrane), and thus conserves the redox energy in a proton gradient. The protein is NADH-quinone oxidoreductase subunit K of Acinetobacter baumannii (strain AB307-0294).